Reading from the N-terminus, the 167-residue chain is SAR-endolysin (167 aa).

A helical; Signal-anchor for type II membrane protein transmembrane segment spans residues 11–31 (VIAAISGGAIAIASVLITGPG). Active-site proton donor/acceptor residues include Glu-37 and Asp-46.

It belongs to the glycosyl hydrolase 24 family.

Its subcellular location is the host cell inner membrane. The enzyme catalyses Hydrolysis of (1-&gt;4)-beta-linkages between N-acetylmuramic acid and N-acetyl-D-glucosamine residues in a peptidoglycan and between N-acetyl-D-glucosamine residues in chitodextrins.. Functionally, signal-arrest-release (SAR) endolysin with lysozyme activity that degrades host peptidoglycans and participates with the pinholin and spanin proteins in the sequential events which lead to programmed host cell lysis releasing the mature viral particles. Once the pinholin has permeabilized the host cell membrane, the SAR-endolysin is released into the periplasm where it breaks down the peptidoglycan layer. In Bacteriophage PS34, this protein is SAR-endolysin (19).